Here is a 346-residue protein sequence, read N- to C-terminus: MESTLSAGIMMAEALQNQLPGLENMWLWVTFLADPKNLFQFYFPAVYYASRRLGISLFWIAFITEWLNLVFKWFLFGDRPFWWVHESGYSAQTPVQIHQFPSSCETGPGSPSGHCMITGAALWPVMIAISSQVASQTRSPWVRVIPGLAYCTFLLAVGLSRVFLLAHFPHQVLAGLLAGVILGWLLSPRVPMERELSFYGLTALTLMLGASLMYWTLFTLGLDLSWSINLASKWCDRPEWVLVDSRPFASLSRDSGSALGLGIALHTPCYAQIRRVHLGNGQKIACFVLAMGLLVFLEWLGHPPQISLFYIFNFLKFTLWPCLVVALVPWMVHTLSAQEAPPIRSS.

Over 1 to 25 (MESTLSAGIMMAEALQNQLPGLENM) the chain is Lumenal. A helical transmembrane segment spans residues 26 to 46 (WLWVTFLADPKNLFQFYFPAV). Over 47-56 (YYASRRLGIS) the chain is Cytoplasmic. The chain crosses the membrane as a helical span at residues 57 to 77 (LFWIAFITEWLNLVFKWFLFG). Over 78–115 (DRPFWWVHESGYSAQTPVQIHQFPSSCETGPGSPSGHC) the chain is Lumenal. Position 79 (arginine 79) interacts with substrate. Residue histidine 114 is the Proton donor of the active site. Residues 116–135 (MITGAALWPVMIAISSQVAS) form a helical membrane-spanning segment. Residues 136–140 (QTRSP) are Cytoplasmic-facing. Residues 141 to 162 (WVRVIPGLAYCTFLLAVGLSRV) form a helical membrane-spanning segment. Arginine 161 serves as a coordination point for substrate. The Lumenal portion of the chain corresponds to 163 to 167 (FLLAH). Histidine 167 serves as the catalytic Nucleophile. A helical membrane pass occupies residues 168-186 (FPHQVLAGLLAGVILGWLL). Residues 187 to 197 (SPRVPMERELS) lie on the Cytoplasmic side of the membrane. Residues 198–218 (FYGLTALTLMLGASLMYWTLF) form a helical membrane-spanning segment. The Lumenal segment spans residues 219–254 (TLGLDLSWSINLASKWCDRPEWVLVDSRPFASLSRD). A helical transmembrane segment spans residues 255 to 273 (SGSALGLGIALHTPCYAQI). Topologically, residues 274–283 (RRVHLGNGQK) are cytoplasmic. Residues 284–304 (IACFVLAMGLLVFLEWLGHPP) traverse the membrane as a helical segment. Over 305–307 (QIS) the chain is Lumenal. A helical membrane pass occupies residues 308-328 (LFYIFNFLKFTLWPCLVVALV). Topologically, residues 329-346 (PWMVHTLSAQEAPPIRSS) are cytoplasmic.

It belongs to the glucose-6-phosphatase family. Expressed in liver and kidney. It is the major glucose-6-phosphatase expressed in the small intestine.

The protein resides in the endoplasmic reticulum membrane. It carries out the reaction D-glucose 6-phosphate + H2O = D-glucose + phosphate. Its pathway is carbohydrate biosynthesis; gluconeogenesis. With respect to regulation, inhibited by vanadate. Functionally, hydrolyzes glucose-6-phosphate to glucose in the endoplasmic reticulum. May form with the glucose-6-phosphate transporter (SLC37A4/G6PT) a ubiquitously expressed complex responsible for glucose production through glycogenolysis and gluconeogenesis. Probably required for normal neutrophil function. This chain is Glucose-6-phosphatase 3 (G6pc3), found in Rattus norvegicus (Rat).